A 340-amino-acid polypeptide reads, in one-letter code: Zinc finger protein 488 (340 aa).

The tract at residues 72–187 (AELALLVAPG…SVFPAGESAD (116 aa)) is important for transcriptional repression activity. Residues 77–180 (LVAPGKPRPG…AERPELTSVF (104 aa)) are disordered. Residues 82-91 (KPRPGKPLPP) show a composition bias toward pro residues. A compositionally biased stretch (basic and acidic residues) spans 106–125 (PRMKDRQVDAQAQEREHDDP). C2H2-type zinc fingers lie at residues 275 to 302 (NWCAKCNLSFRLTSDLVFHMRSHHKKEH) and 317 to 339 (LACPVCQEHFRERHHLSRHMTSH). The short motif at 298-305 (HKKEHAGP) is the Nuclear localization signal element.

Belongs to the krueppel C2H2-type zinc-finger protein family. As to quaternary structure, interacts with OLIG2.

It localises to the nucleus. Its function is as follows. Transcriptional repressor. Plays a role in oligodendrocyte differentiation, together with OLIG2. Mediates Notch signaling-activated formation of oligodendrocyte precursors. Promotes differentiation of adult neural stem progenitor cells (NSPCs) into mature oligodendrocytes and contributes to remyelination following nerve injury. This Homo sapiens (Human) protein is Zinc finger protein 488 (ZNF488).